The sequence spans 394 residues: MAESNFVDYVKIYCRSGKGGRGSAHMRREKYVPNGGPDGGDGGRGGHVILRGNRNYWTLLHLKYDRHVFATHGGNGSKNKSFGKDGEDKVIEVPCGTVVYNAETGEYICDITEHGQEIILLKGGRGGLGNWHFRTATRQAPRFAQPGEPMQELMVILELKLLADVGLVGFPNAGKSTLLSTVSAARPKIANYPFTTLEPNLGIVSYREGKSFVMADIPGIIEGASEGKGLGLRFLRHIERNSLLLFMVPGDTDDIRKEYEILLNELATFNPEMLDKQRVLAITKSDMLDEELIAMLEPTLPDNVPHIFISSVTGLGIQQLKDILWTELNKDSNKLEGVRTETIVHRAKDVAKLQEELKDMGEDEDFEYEYEEDADDDFDYEYEDENWDEEEEKK.

The Obg domain occupies 4-162 (SNFVDYVKIY…LMVILELKLL (159 aa)). An OBG-type G domain is found at 163–329 (ADVGLVGFPN…LKDILWTELN (167 aa)). GTP-binding positions include 169–176 (GFPNAGKS), 194–198 (FTTLE), 216–219 (DIPG), 283–286 (TKSD), and 310–312 (SSV). Positions 176 and 196 each coordinate Mg(2+). The tract at residues 358-394 (KDMGEDEDFEYEYEEDADDDFDYEYEDENWDEEEEKK) is disordered. A compositionally biased stretch (acidic residues) spans 361 to 394 (GEDEDFEYEYEEDADDDFDYEYEDENWDEEEEKK).

This sequence belongs to the TRAFAC class OBG-HflX-like GTPase superfamily. OBG GTPase family. Monomer. Requires Mg(2+) as cofactor.

Its subcellular location is the cytoplasm. An essential GTPase which binds GTP, GDP and possibly (p)ppGpp with moderate affinity, with high nucleotide exchange rates and a fairly low GTP hydrolysis rate. Plays a role in control of the cell cycle, stress response, ribosome biogenesis and in those bacteria that undergo differentiation, in morphogenesis control. This is GTPase Obg from Phocaeicola vulgatus (strain ATCC 8482 / DSM 1447 / JCM 5826 / CCUG 4940 / NBRC 14291 / NCTC 11154) (Bacteroides vulgatus).